Here is an 81-residue protein sequence, read N- to C-terminus: Photosystem I iron-sulfur center (81 aa).

4Fe-4S ferredoxin-type domains are found at residues 2-31 and 39-68; these read SHSV…MVPW and IASA…VRVY. C11, C14, C17, C21, C48, C51, C54, and C58 together coordinate [4Fe-4S] cluster.

The eukaryotic PSI reaction center is composed of at least 11 subunits. [4Fe-4S] cluster is required as a cofactor.

The protein resides in the plastid. It is found in the chloroplast thylakoid membrane. The catalysed reaction is reduced [plastocyanin] + hnu + oxidized [2Fe-2S]-[ferredoxin] = oxidized [plastocyanin] + reduced [2Fe-2S]-[ferredoxin]. Functionally, apoprotein for the two 4Fe-4S centers FA and FB of photosystem I (PSI); essential for photochemical activity. FB is the terminal electron acceptor of PSI, donating electrons to ferredoxin. The C-terminus interacts with PsaA/B/D and helps assemble the protein into the PSI complex. Required for binding of PsaD and PsaE to PSI. PSI is a plastocyanin/cytochrome c6-ferredoxin oxidoreductase, converting photonic excitation into a charge separation, which transfers an electron from the donor P700 chlorophyll pair to the spectroscopically characterized acceptors A0, A1, FX, FA and FB in turn. This is Photosystem I iron-sulfur center from Emiliania huxleyi (Coccolithophore).